Reading from the N-terminus, the 517-residue chain is Synaptic vesicular amine transporter (517 aa).

Topologically, residues Met-1–Lys-20 are cytoplasmic. A helical transmembrane segment spans residues Leu-21–Val-41. Residues Pro-42–Val-132 lie on the Extracellular side of the membrane. Asn-84, Asn-91, and Asn-112 each carry an N-linked (GlcNAc...) asparagine glycan. Cys-120 and Cys-327 are oxidised to a cystine. Residues Gln-133–Gly-153 traverse the membrane as a helical segment. At Leu-154–Pro-162 the chain is on the cytoplasmic side. Residues Ile-163–Arg-183 form a helical membrane-spanning segment. Topologically, residues Thr-184–Arg-192 are extracellular. A helical membrane pass occupies residues Ser-193–Val-213. Residues Tyr-214–Asn-222 are Cytoplasmic-facing. A helical transmembrane segment spans residues Ala-223–Leu-245. The serotonin site is built by Leu-231 and Val-235. At Tyr-246–Lys-251 the chain is on the extracellular side. The chain crosses the membrane as a helical span at residues Thr-252–Gln-274. Residues Pro-275–Asp-294 are Cytoplasmic-facing. The helical transmembrane segment at Pro-295–Leu-314 threads the bilayer. The serotonin site is built by Asn-308, Ile-311, Glu-315, Phe-337, and Tyr-344. Topologically, residues Glu-315 to Trp-331 are extracellular. Residues Gln-332–Ala-355 traverse the membrane as a helical segment. At His-356 to Arg-360 the chain is on the cytoplasmic side. The chain crosses the membrane as a helical span at residues Trp-361–Ala-381. Residues Lys-382–Phe-392 are Extracellular-facing. A helical transmembrane segment spans residues Gly-393–Val-413. Serotonin is bound at residue Asp-402. At Asp-414–His-417 the chain is on the cytoplasmic side. A helical transmembrane segment spans residues Val-418–Ile-438. A serotonin-binding site is contributed by Tyr-436. The Extracellular portion of the chain corresponds to Gly-439–Gly-443. The chain crosses the membrane as a helical span at residues Gly-444 to Leu-465. Over Phe-466–Asp-517 the chain is Cytoplasmic. A phosphoserine; by CK2 mark is found at Ser-514 and Ser-516.

It belongs to the major facilitator superfamily. Vesicular transporter family. Interacts with SLC6A3.

The protein resides in the cytoplasmic vesicle. It is found in the secretory vesicle. It localises to the synaptic vesicle membrane. Its subcellular location is the secretory vesicle membrane. The protein localises to the cell projection. The protein resides in the axon. It is found in the dendrite. It carries out the reaction serotonin(in) + 2 H(+)(out) = serotonin(out) + 2 H(+)(in). The catalysed reaction is dopamine(in) + 2 H(+)(out) = dopamine(out) + 2 H(+)(in). It catalyses the reaction histamine(in) + 2 H(+)(out) = histamine(out) + 2 H(+)(in). Strongly inhibited by reserpine and tetrabenazine. Also inhibited to a lesser extent by ketanserin and fenfluramine. Reserpine and ketanserin inhibit by blocking the substrate-binding pocket. Tetrabenazine traps SLC18A2/VMAT2 in an occluded conformation and its inhibition is specific to SLC18A2/VMAT2 but not SLC18A1/VMAT1. Its function is as follows. Electrogenic antiporter that exchanges one cationic monoamine with two intravesicular protons across the membrane of secretory and synaptic vesicles. Uses the electrochemical proton gradient established by the V-type proton-pump ATPase to accumulate high concentrations of monoamines inside the vesicles prior to their release via exocytosis. Transports a variety of catecholamines such as dopamine, adrenaline and noradrenaline, histamine, and indolamines such as serotonin. Regulates the transvesicular monoaminergic gradient that determines the quantal size. Mediates somatodendritic dopamine release in hippocampal neurons, likely as part of a regulated secretory pathway that integrates retrograde synaptic signals. Acts as a primary transporter for striatal dopamine loading ensuring impulse-dependent release of dopamine at the synaptic cleft. Responsible for histamine and serotonin storage and subsequent corelease from mast cell granules. The chain is Synaptic vesicular amine transporter (SLC18A2) from Bos taurus (Bovine).